A 125-amino-acid chain; its full sequence is Protein ApaG (125 aa).

Residues 3-125 (TAVTEGIEVT…FPLVVPGSLN (123 aa)) form the ApaG domain.

The protein is Protein ApaG of Anaeromyxobacter dehalogenans (strain 2CP-1 / ATCC BAA-258).